The sequence spans 354 residues: NADH-quinone oxidoreductase subunit H (354 aa).

Transmembrane regions (helical) follow at residues 22–42, 91–111, 124–144, 168–188, 203–223, 255–275, 291–311, and 326–346; these read ILIRAVIIVVPLLLCVAYLIL, YLIAPLMVLMPAVAIWAVIPF, LLYVMAISSVGVYGVILAGWA, MGFALVTVLMVAGSLNLSAIV, ILSWNWLPLLPMFGVYFISGV, LFFLAEYINMIIISTMTALMF, IPGFFWLLIKVFLLLSVFIWI, and LGWKVFIPLTVAWLIIVAIWI.

It belongs to the complex I subunit 1 family. As to quaternary structure, NDH-1 is composed of 14 different subunits. Subunits NuoA, H, J, K, L, M, N constitute the membrane sector of the complex.

Its subcellular location is the cell inner membrane. The catalysed reaction is a quinone + NADH + 5 H(+)(in) = a quinol + NAD(+) + 4 H(+)(out). In terms of biological role, NDH-1 shuttles electrons from NADH, via FMN and iron-sulfur (Fe-S) centers, to quinones in the respiratory chain. The immediate electron acceptor for the enzyme in this species is believed to be ubiquinone. Couples the redox reaction to proton translocation (for every two electrons transferred, four hydrogen ions are translocated across the cytoplasmic membrane), and thus conserves the redox energy in a proton gradient. This subunit may bind ubiquinone. This chain is NADH-quinone oxidoreductase subunit H, found in Cupriavidus taiwanensis (strain DSM 17343 / BCRC 17206 / CCUG 44338 / CIP 107171 / LMG 19424 / R1) (Ralstonia taiwanensis (strain LMG 19424)).